A 453-amino-acid chain; its full sequence is Ankyrin repeat and SOCS box protein 16 (453 aa).

ANK repeat units lie at residues 56–85 (CRDPAVHNALFSGDLQQLQILFQDEDAANM), 110–139 (KQTAPLTIAVARGYTDCARHLILQGAELDA), 142–171 (GGRAALHEACAQAHPDCVRLLLTFGAKANV), 175–204 (EGMTPLHLCTSPESLQCAKLLLEAGASVNV), 209–238 (SEVTPLHVAAARGLEQHVALYLQNGADVAL), 242–279 (QGETALNAACAGAEGPGSSRQHEAAARQLLEAGADPQA), and 283–312 (KRHTPLHNACANGCGGLAELLLRHGASPGV). Residues 397–453 (FYSSALSMENQPRQLQHLARLAVRAQLGSHCRQAAAQLPLPPLLRDYLLLGVEGRIQ) form the SOCS box domain.

Belongs to the ankyrin SOCS box (ASB) family.

It participates in protein modification; protein ubiquitination. In terms of biological role, may be a substrate-recognition component of a SCF-like ECS (Elongin-Cullin-SOCS-box protein) E3 ubiquitin-protein ligase complex which mediates the ubiquitination and subsequent proteasomal degradation of target proteins. This Mus musculus (Mouse) protein is Ankyrin repeat and SOCS box protein 16 (Asb16).